Reading from the N-terminus, the 406-residue chain is 12S rRNA N(4)-cytidine methyltransferase METTL15 (406 aa).

A mitochondrion-targeting transit peptide spans 1–22; it reads MLRYPYFYRTYNRLFSHFVDSG. Residues 100 to 102, Asp-119, Phe-146, Asp-169, and Gln-176 contribute to the S-adenosyl-L-methionine site; that span reads GGH. Ser-358 bears the Phosphoserine mark.

The protein belongs to the methyltransferase superfamily. RsmH family.

It localises to the mitochondrion matrix. The catalysed reaction is cytidine(839) in 12S rRNA + S-adenosyl-L-methionine = N(4)-methylcytidine(839) in 12S rRNA + S-adenosyl-L-homocysteine + H(+). N4-methylcytidine (m4C) methyltransferase responsible for the methylation of position C839 in mitochondrial 12S rRNA. Involved in the stabilization of 12S rRNA folding, therefore facilitating the assembly of the mitochondrial small ribosomal subunits. The sequence is that of 12S rRNA N(4)-cytidine methyltransferase METTL15 from Mus musculus (Mouse).